We begin with the raw amino-acid sequence, 167 residues long: Ribonuclease P protein subunit p20 (167 aa).

Residues 1–36 (MMGSNYPEHGTKPRSAKYHKQQNHRVVRKQPPRPAV) are disordered. Positions 12-31 (KPRSAKYHKQQNHRVVRKQP) are enriched in basic residues.

Interacts with Smn.

It is found in the nucleus. The protein localises to the nucleolus. It localises to the cytoplasm. Its subcellular location is the cytoplasmic granule. Functionally, component of ribonuclease P, a protein complex that generates mature tRNA molecules by cleaving their 5'-ends. Also a component of RNase MRP complex, which cleaves pre-rRNA sequences. The sequence is that of Ribonuclease P protein subunit p20 from Drosophila melanogaster (Fruit fly).